The primary structure comprises 220 residues: MRTRVKICGLTREADIASAVQAGADAIGFVFYPGSKRYVQPVLAARLRRTVPAFVDVVALFVNPAPADVQAVLDQVGPDLIQFHGDESAAECARYGTRFLRAFRTGAPGLDTPGNLAAACRAYDAAAGWLFDSYSAGYGGSGQAFDHALLAGVRADAAARPLILSGGLNAANVGTAIEACRPWAVDVSSGVETAPGEKSPDKIRALLDAVRQADDRLRGL.

This sequence belongs to the TrpF family.

The enzyme catalyses N-(5-phospho-beta-D-ribosyl)anthranilate = 1-(2-carboxyphenylamino)-1-deoxy-D-ribulose 5-phosphate. The protein operates within amino-acid biosynthesis; L-tryptophan biosynthesis; L-tryptophan from chorismate: step 3/5. The chain is N-(5'-phosphoribosyl)anthranilate isomerase from Bordetella petrii (strain ATCC BAA-461 / DSM 12804 / CCUG 43448).